Reading from the N-terminus, the 767-residue chain is Photosystem I P700 chlorophyll a apoprotein A1 (767 aa).

The tract at residues 1-22 (MTISPPESGEKNKKVLEDPVKA) is disordered. The segment covering 8-22 (SGEKNKKVLEDPVKA) has biased composition (basic and acidic residues). The next 8 membrane-spanning stretches (helical) occupy residues 76-99 (IFSA…FHGA), 162-185 (LMAL…FHYH), 201-225 (LNHH…HIGA), 309-327 (VSHH…GHMY), 368-391 (RHAQ…HHMY), 407-433 (LGLF…IAMV), 455-477 (ALIS…LYIH), and 558-576 (LMIH…LILL). The [4Fe-4S] cluster site is built by cysteine 600 and cysteine 609. Transmembrane regions (helical) follow at residues 616 to 637 (HVFL…HFSW) and 681 to 703 (ISMY…MFLF). Histidine 692 contacts divinylchlorophyll a'. Residues methionine 700 and tyrosine 708 each coordinate divinyl chlorophyll a. Tryptophan 709 lines the phylloquinone pocket. A helical transmembrane segment spans residues 741–761 (AVGVTHFLVGGIATTWAFFHA).

This sequence belongs to the PsaA/PsaB family. In terms of assembly, the PsaA/B heterodimer binds the P700 divinyl chlorophyll special pair and subsequent electron acceptors. PSI consists of a core antenna complex that captures photons, and an electron transfer chain that converts photonic excitation into a charge separation. The cyanobacterial PSI reaction center is composed of one copy each of PsaA,B,C,D,E,F,I,J,K,L,M and X, and forms trimeric complexes. PSI electron transfer chain: 5 divinyl chlorophyll a, 1 divinyl chlorophyll a', 2 phylloquinones and 3 4Fe-4S clusters. PSI core antenna: 90 divinyl chlorophyll a, 22 carotenoids, 3 phospholipids and 1 galactolipid. P700 is a divinyl chlorophyll a/divinyl chlorophyll a' dimer, A0 is one or more divinyl chlorophyll a, A1 is one or both phylloquinones and FX is a shared 4Fe-4S iron-sulfur center. is required as a cofactor.

Its subcellular location is the cellular thylakoid membrane. The enzyme catalyses reduced [plastocyanin] + hnu + oxidized [2Fe-2S]-[ferredoxin] = oxidized [plastocyanin] + reduced [2Fe-2S]-[ferredoxin]. In terms of biological role, psaA and PsaB bind P700, the primary electron donor of photosystem I (PSI), as well as the electron acceptors A0, A1 and FX. PSI is a plastocyanin/cytochrome c6-ferredoxin oxidoreductase, converting photonic excitation into a charge separation, which transfers an electron from the donor P700 chlorophyll pair to the spectroscopically characterized acceptors A0, A1, FX, FA and FB in turn. Oxidized P700 is reduced on the lumenal side of the thylakoid membrane by plastocyanin or cytochrome c6. This chain is Photosystem I P700 chlorophyll a apoprotein A1, found in Prochlorococcus marinus (strain AS9601).